Here is a 298-residue protein sequence, read N- to C-terminus: WRKY transcription factor 22 (298 aa).

2 disordered regions span residues 75–116 and 181–220; these read EEPR…IQHK and AEHNHPAPTHRNSLAGSTRQKPSDQQTSKSPTTTIATYSS. Low complexity predominate over residues 88–103; the sequence is SLSASSGSVTSKPSGS. Positions 107–116 are enriched in basic residues; sequence RSKRRKIQHK. Residues 122 to 188 constitute a DNA-binding region (WRKY); it reads AAEALNSDVW…YTAEHNHPAP (67 aa). Residues 190–220 are compositionally biased toward polar residues; that stretch reads HRNSLAGSTRQKPSDQQTSKSPTTTIATYSS.

Belongs to the WRKY group II-e family.

It is found in the nucleus. Transcription factor involved in the expression of defense genes in innate immune response of plants. Interacts specifically with the W box (5'-(T)TGAC[CT]-3'), a frequently occurring elicitor-responsive cis-acting element. Activates WRKY 29, SIRK and its own promoters. This is WRKY transcription factor 22 (WRKY22) from Arabidopsis thaliana (Mouse-ear cress).